A 200-amino-acid polypeptide reads, in one-letter code: ATP synthase subunit s, mitochondrial (200 aa).

Residues 1-25 constitute a mitochondrion transit peptide; the sequence is MMLFGKISQQLCGLKKLPWSRDSRY. The interval 1 to 61 is N-terminal domain; the sequence is MMLFGKISQQ…SEWLLRCGAM (61 aa). Gly-59 contributes to the Mg(2+) binding site. 4 LRR repeats span residues 62 to 87, 88 to 116, 117 to 141, and 142 to 173; these read VRYH…KYKI, QAID…KIRL, CKCH…KSML, and EMEI…LSDL. Thr-93 contributes to the Mg(2+) binding site.

This sequence belongs to the ATP synthase subunit s family. As to quaternary structure, homotetramer. Associates with ATP synthase.

Its subcellular location is the mitochondrion. It localises to the mitochondrion inner membrane. In terms of biological role, involved in regulation of mitochondrial membrane ATP synthase. Necessary for H(+) conduction of ATP synthase. Facilitates energy-driven catalysis of ATP synthesis by blocking a proton leak through an alternative proton exit pathway. The polypeptide is ATP synthase subunit s, mitochondrial (DMAC2L) (Bos taurus (Bovine)).